Here is an 848-residue protein sequence, read N- to C-terminus: Glutenin, high molecular weight subunit DX5 (848 aa).

An N-terminal signal peptide occupies residues 1–21; it reads MAKRLVLFVAVVVALVALTVA. The tract at residues 124-804 is disordered; the sequence is YYPGQASPQR…GQQSGQGQQG (681 aa). Composition is skewed to low complexity over residues 126–137, 145–166, 173–203, 210–240, 263–303, 310–351, 359–411, 419–468, 476–527, 544–659, 670–687, 709–727, and 739–795; these read PGQASPQRPGQG, QGYY…QGQP, PQQS…GQPG, QLQP…PGQG, QGQQ…GQSG, QQPG…PGQG, PGYY…PGQG, QGQQ…YPTS, QQPG…QGQP, GQGQ…GQPG, QQPG…GQGQ, and GQGQ…TGQG.

Belongs to the gliadin/glutenin family. In terms of assembly, disulfide-bridge linked aggregates.

Glutenins are high-molecular weight seed storage proteins of wheat endosperm. Thought to be responsible for the visco-elastic property of wheat dough. This Triticum aestivum (Wheat) protein is Glutenin, high molecular weight subunit DX5 (GLU-1D-1D).